Consider the following 72-residue polypeptide: Large ribosomal subunit protein bL31 (72 aa).

Cysteine 16, cysteine 18, cysteine 38, and cysteine 41 together coordinate Zn(2+).

It belongs to the bacterial ribosomal protein bL31 family. Type A subfamily. Part of the 50S ribosomal subunit. Zn(2+) is required as a cofactor.

In terms of biological role, binds the 23S rRNA. The protein is Large ribosomal subunit protein bL31 of Beutenbergia cavernae (strain ATCC BAA-8 / DSM 12333 / CCUG 43141 / JCM 11478 / NBRC 16432 / NCIMB 13614 / HKI 0122).